The sequence spans 317 residues: MPDSRPDTELSNPQSAKAPLDPHLKALENESIHIFREVAAEFERPVMLYSIGKDSSVLLHLARKAFYPGRVPFPLLHVNTGWKFREMIAFRDETARKYDLDLIEHINPRGAAENITPFTHGSAAFTDIMKTESLRQALDAGQFDAAFGGARRDEEASRAKERIYSFRTPDHRWDPRNQRPELWNIYNGMIRKGESVRAFPLSNWTEVDIWRYIQAEDIPLVPLYYAKKRKFVERDGMMILAEDPRLELLPGEVRQEGMIRFRTLGDFPLTGAIRSQATTLEEVIAELEIATVSERQGRAIDRDQSGSMEKKKREGYF.

Disordered stretches follow at residues 1 to 21 (MPDS…APLD) and 298 to 317 (RAID…EGYF).

This sequence belongs to the PAPS reductase family. CysD subfamily. Heterodimer composed of CysD, the smaller subunit, and CysN.

The enzyme catalyses sulfate + ATP + H(+) = adenosine 5'-phosphosulfate + diphosphate. The protein operates within sulfur metabolism; hydrogen sulfide biosynthesis; sulfite from sulfate: step 1/3. Its function is as follows. With CysN forms the ATP sulfurylase (ATPS) that catalyzes the adenylation of sulfate producing adenosine 5'-phosphosulfate (APS) and diphosphate, the first enzymatic step in sulfur assimilation pathway. APS synthesis involves the formation of a high-energy phosphoric-sulfuric acid anhydride bond driven by GTP hydrolysis by CysN coupled to ATP hydrolysis by CysD. The chain is Sulfate adenylyltransferase subunit 2 from Rhizobium etli (strain ATCC 51251 / DSM 11541 / JCM 21823 / NBRC 15573 / CFN 42).